We begin with the raw amino-acid sequence, 141 residues long: Large ribosomal subunit protein uL14 (141 aa).

Belongs to the universal ribosomal protein uL14 family.

This chain is Large ribosomal subunit protein uL14 (RPL23), found in Tetrahymena thermophila (strain SB210).